A 478-amino-acid polypeptide reads, in one-letter code: RNA-binding protein 42 (478 aa).

Low complexity predominate over residues 1-20; it reads MASAMAGAGPAPGLPVAGGP. Residues 1–33 form a disordered region; that stretch reads MASAMAGAGPAPGLPVAGGPVVPGPGVGIPGKS. Residue Ala-2 is modified to N-acetylalanine. Residue Ser-133 is modified to Phosphoserine. Arg-151, Arg-156, Arg-166, and Arg-179 each carry asymmetric dimethylarginine. 2 disordered regions span residues 171 to 209 and 317 to 354; these read LSSAAGGPRPMALRPPHQALVGPPLPGPPGPPMMLPPMA and SLRPRPRPPRPEPPPGLMALEVPEPLGEDKKKGKPEKL. Pro residues predominate over residues 193-205; it reads PPLPGPPGPPMML. Residues 234–478 are necessary for interaction with HNRNPK; the sequence is DLGLGLGLGL…QKEKKKLGLR (245 aa). Basic and acidic residues predominate over residues 343–354; that stretch reads GEDKKKGKPEKL. Residues 379 to 457 enclose the RRM domain; that stretch reads FRIFCGDLGN…RPIKLRKSMW (79 aa).

It belongs to the RRM RBM42 family. As to quaternary structure, interacts with HNRNPK.

The protein resides in the nucleus. It localises to the cytoplasm. Its function is as follows. Binds (via the RRM domain) to the 3' untranslated region (UTR) of p21 mRNA. The sequence is that of RNA-binding protein 42 (Rbm42) from Rattus norvegicus (Rat).